We begin with the raw amino-acid sequence, 919 residues long: Isoleucine--tRNA ligase (919 aa).

A 'HIGH' region motif is present at residues 57 to 67 (PYANGDIHMGT). E552 contributes to the L-isoleucyl-5'-AMP binding site. The short motif at 593–597 (KMSKS) is the 'KMSKS' region element. K596 serves as a coordination point for ATP. Residues C886, C889, C906, and C909 each coordinate Zn(2+).

It belongs to the class-I aminoacyl-tRNA synthetase family. IleS type 1 subfamily. Monomer. The cofactor is Zn(2+).

It is found in the cytoplasm. It carries out the reaction tRNA(Ile) + L-isoleucine + ATP = L-isoleucyl-tRNA(Ile) + AMP + diphosphate. In terms of biological role, catalyzes the attachment of isoleucine to tRNA(Ile). As IleRS can inadvertently accommodate and process structurally similar amino acids such as valine, to avoid such errors it has two additional distinct tRNA(Ile)-dependent editing activities. One activity is designated as 'pretransfer' editing and involves the hydrolysis of activated Val-AMP. The other activity is designated 'posttransfer' editing and involves deacylation of mischarged Val-tRNA(Ile). The protein is Isoleucine--tRNA ligase of Petrotoga mobilis (strain DSM 10674 / SJ95).